Reading from the N-terminus, the 525-residue chain is MKYIIVTGGVMSGLGKGITAASIGRILKNRGYRVTAVKIDPYLNIDAGTMNPAQHGEVFVLGDGSEVDLDLGNYERFLDIELSGPHNITTGKVYRSVIEKERRGDYLGDTVQIIPHITDEIKCRIEQAATEGDENGAAEICLVEVGGTVGDIESMPFLEAVRQMRGELPEDEMVLIHVTLIPEDTMGDMKTKPTQHSVKALREAGLYADMIVGRSEHPIGLHTKRKIASFCDVAAQAVVSATTVPDIYQVPVELEKEGLADAITTHLHLDRREALEEWYNVVAREYTSRITVAIVSKYGIEDVYLSIKEALKHAGRALATEVKIVWLDAERYEPCQLADVDGILIPGGFGIRGIEGKIRAIQYAREHNIPFLGLCLGFQLAVVEFARHVLGWKDACSEEIGDGRHVIAILPEQEGVDDLGGTMRLGNYPVTVKAGTIAEQLYRRSTITERHRHRYEVNPEEISALEEAGLVFSGLNGPRMEICELPGHPFFFATQFHPEFRSRPTRPAPAFLGFVSACRKNKKTP.

Residues 1–269 form an amidoligase domain region; sequence MKYIIVTGGV…ADAITTHLHL (269 aa). A CTP-binding site is contributed by Ser-12. A UTP-binding site is contributed by Ser-12. Residues 13–18 and Asp-70 each bind ATP; that span reads GLGKGI. 2 residues coordinate Mg(2+): Asp-70 and Glu-144. Residues 151–153, 190–195, and Lys-226 each bind CTP; these read DIE and KTKPTQ. UTP-binding positions include 190 to 195 and Lys-226; that span reads KTKPTQ. The region spanning 292 to 524 is the Glutamine amidotransferase type-1 domain; that stretch reads VAIVSKYGIE…VSACRKNKKT (233 aa). Gly-348 lines the L-glutamine pocket. The active-site Nucleophile; for glutamine hydrolysis is Cys-375. L-glutamine is bound by residues 376 to 379, Glu-399, and Arg-454; that span reads LGFQ. Active-site residues include His-497 and Glu-499.

Belongs to the CTP synthase family. Homotetramer.

It catalyses the reaction UTP + L-glutamine + ATP + H2O = CTP + L-glutamate + ADP + phosphate + 2 H(+). The enzyme catalyses L-glutamine + H2O = L-glutamate + NH4(+). It carries out the reaction UTP + NH4(+) + ATP = CTP + ADP + phosphate + 2 H(+). The protein operates within pyrimidine metabolism; CTP biosynthesis via de novo pathway; CTP from UDP: step 2/2. With respect to regulation, allosterically activated by GTP, when glutamine is the substrate; GTP has no effect on the reaction when ammonia is the substrate. The allosteric effector GTP functions by stabilizing the protein conformation that binds the tetrahedral intermediate(s) formed during glutamine hydrolysis. Inhibited by the product CTP, via allosteric rather than competitive inhibition. Its function is as follows. Catalyzes the ATP-dependent amination of UTP to CTP with either L-glutamine or ammonia as the source of nitrogen. Regulates intracellular CTP levels through interactions with the four ribonucleotide triphosphates. The protein is CTP synthase of Methanosphaerula palustris (strain ATCC BAA-1556 / DSM 19958 / E1-9c).